Consider the following 313-residue polypeptide: Protein-methionine-sulfoxide reductase catalytic subunit MsrP (313 aa).

Residues 1-44 constitute a signal peptide (tat-type signal); sequence MARWRPDMAEREATPEALYLRRREFLALGAAGAVGLLVARGARA. Mo-molybdopterin-binding positions include asparagine 76, 79–80, cysteine 134, threonine 169, asparagine 217, arginine 222, and 233–235; these read YE and GAK.

The protein belongs to the MsrP family. In terms of assembly, heterodimer of a catalytic subunit (MsrP) and a heme-binding subunit (MsrQ). The cofactor is Mo-molybdopterin. In terms of processing, predicted to be exported by the Tat system. The position of the signal peptide cleavage has not been experimentally proven.

It localises to the periplasm. The enzyme catalyses L-methionyl-[protein] + a quinone + H2O = L-methionyl-(S)-S-oxide-[protein] + a quinol. It carries out the reaction L-methionyl-[protein] + a quinone + H2O = L-methionyl-(R)-S-oxide-[protein] + a quinol. Its function is as follows. Part of the MsrPQ system that repairs oxidized periplasmic proteins containing methionine sulfoxide residues (Met-O), using respiratory chain electrons. Thus protects these proteins from oxidative-stress damage caused by reactive species of oxygen and chlorine generated by the host defense mechanisms. MsrPQ is essential for the maintenance of envelope integrity under bleach stress, rescuing a wide series of structurally unrelated periplasmic proteins from methionine oxidation. The catalytic subunit MsrP is non-stereospecific, being able to reduce both (R-) and (S-) diastereoisomers of methionine sulfoxide. The protein is Protein-methionine-sulfoxide reductase catalytic subunit MsrP of Anaeromyxobacter sp. (strain K).